Here is a 258-residue protein sequence, read N- to C-terminus: Type III pantothenate kinase (258 aa).

6-13 serves as a coordination point for ATP; the sequence is DVGNTNTV. Residues tyrosine 100 and 107–110 each bind substrate; that span reads GADR. Catalysis depends on aspartate 109, which acts as the Proton acceptor. Residue aspartate 129 coordinates K(+). Residue threonine 132 participates in ATP binding. A substrate-binding site is contributed by threonine 184.

The protein belongs to the type III pantothenate kinase family. As to quaternary structure, homodimer. The cofactor is NH4(+). It depends on K(+) as a cofactor.

Its subcellular location is the cytoplasm. The catalysed reaction is (R)-pantothenate + ATP = (R)-4'-phosphopantothenate + ADP + H(+). It participates in cofactor biosynthesis; coenzyme A biosynthesis; CoA from (R)-pantothenate: step 1/5. Functionally, catalyzes the phosphorylation of pantothenate (Pan), the first step in CoA biosynthesis. This Bacillus velezensis (strain DSM 23117 / BGSC 10A6 / LMG 26770 / FZB42) (Bacillus amyloliquefaciens subsp. plantarum) protein is Type III pantothenate kinase.